We begin with the raw amino-acid sequence, 242 residues long: NAD-dependent protein deacetylase (242 aa).

The region spanning 1 to 242 (MQQFEEVHSI…EFVEGLSSRK (242 aa)) is the Deacetylase sirtuin-type domain. A23, T27, F34, R35, Q102, I104, D105, and H120 together coordinate NAD(+). F34 contributes to the nicotinamide binding site. Residues I104 and D105 each coordinate nicotinamide. The active-site Proton acceptor is the H120. 4 residues coordinate Zn(2+): C128, C131, C148, and C151. NAD(+) contacts are provided by T187, S188, N213, and I231.

This sequence belongs to the sirtuin family. Class U subfamily. It depends on Zn(2+) as a cofactor.

The protein resides in the cytoplasm. The catalysed reaction is N(6)-acetyl-L-lysyl-[protein] + NAD(+) + H2O = 2''-O-acetyl-ADP-D-ribose + nicotinamide + L-lysyl-[protein]. NAD-dependent protein deacetylase which modulates the activities of several enzymes which are inactive in their acetylated form. This is NAD-dependent protein deacetylase from Bacillus cereus (strain ATCC 10987 / NRS 248).